Reading from the N-terminus, the 381-residue chain is Chaperone protein DnaJ (381 aa).

Positions 4-69 (DYYEILGVTR…QKRAAYDRFG (66 aa)) constitute a J domain. The segment at 135–213 (GKTAQINIPS…CQGTRRVEKN (79 aa)) adopts a CR-type zinc-finger fold. C148, C151, C165, C168, C187, C190, C201, and C204 together coordinate Zn(2+). CXXCXGXG motif repeat units follow at residues 148–155 (CDACEGSG), 165–172 (CGTCHGAG), 187–194 (CPVCHGRG), and 201–208 (CPKCQGTR).

Belongs to the DnaJ family. As to quaternary structure, homodimer. Zn(2+) is required as a cofactor.

Its subcellular location is the cytoplasm. In terms of biological role, participates actively in the response to hyperosmotic and heat shock by preventing the aggregation of stress-denatured proteins and by disaggregating proteins, also in an autonomous, DnaK-independent fashion. Unfolded proteins bind initially to DnaJ; upon interaction with the DnaJ-bound protein, DnaK hydrolyzes its bound ATP, resulting in the formation of a stable complex. GrpE releases ADP from DnaK; ATP binding to DnaK triggers the release of the substrate protein, thus completing the reaction cycle. Several rounds of ATP-dependent interactions between DnaJ, DnaK and GrpE are required for fully efficient folding. Also involved, together with DnaK and GrpE, in the DNA replication of plasmids through activation of initiation proteins. This Bartonella henselae (strain ATCC 49882 / DSM 28221 / CCUG 30454 / Houston 1) (Rochalimaea henselae) protein is Chaperone protein DnaJ.